The primary structure comprises 441 residues: Amino-acid acetyltransferase (441 aa).

Residues 295–434 (EQVRRATIND…QELYNYQRRS (140 aa)) form the N-acetyltransferase domain.

Belongs to the acetyltransferase family. ArgA subfamily. Homohexamer.

It localises to the cytoplasm. It carries out the reaction L-glutamate + acetyl-CoA = N-acetyl-L-glutamate + CoA + H(+). It functions in the pathway amino-acid biosynthesis; L-arginine biosynthesis; N(2)-acetyl-L-ornithine from L-glutamate: step 1/4. This is Amino-acid acetyltransferase from Yersinia enterocolitica serotype O:8 / biotype 1B (strain NCTC 13174 / 8081).